The chain runs to 403 residues: Phosphoglycerate kinase (403 aa).

Substrate-binding positions include 21-23 (DFN), R36, 59-62 (HLGR), R119, and R154. ATP is bound by residues K207, G299, E330, and 357–360 (GGDA).

Belongs to the phosphoglycerate kinase family. Monomer.

The protein resides in the cytoplasm. It carries out the reaction (2R)-3-phosphoglycerate + ATP = (2R)-3-phospho-glyceroyl phosphate + ADP. The protein operates within carbohydrate degradation; glycolysis; pyruvate from D-glyceraldehyde 3-phosphate: step 2/5. This Chlamydia felis (strain Fe/C-56) (Chlamydophila felis) protein is Phosphoglycerate kinase.